Reading from the N-terminus, the 130-residue chain is MSMQDPIADMLTRIRNGQAANKAAVTMPSSKLKVAIANVLKEEGFIEDFKVEGDTKPELELTLKYFQGKAVVESIQRVSRPGLRIYKKKDELPKVMAGLGIAVISTSKGVMTDRAARQAGLGGEIICYVA.

The protein belongs to the universal ribosomal protein uS8 family. As to quaternary structure, part of the 30S ribosomal subunit. Contacts proteins S5 and S12.

One of the primary rRNA binding proteins, it binds directly to 16S rRNA central domain where it helps coordinate assembly of the platform of the 30S subunit. This chain is Small ribosomal subunit protein uS8, found in Cronobacter sakazakii (strain ATCC BAA-894) (Enterobacter sakazakii).